The following is a 713-amino-acid chain: UvrABC system protein B (713 aa).

The region spanning 35-421 (RRIRAGEKDV…GDGFVEQIIR (387 aa)) is the Helicase ATP-binding domain. 48-55 (GATGTGKS) serves as a coordination point for ATP. Positions 101-124 (YYDYYQPEAYVPQSDTYIEKDSSI) match the Beta-hairpin motif. The Helicase C-terminal domain maps to 438–604 (QIDDLVHEIR…PLRKKINDIV (167 aa)). The disordered stretch occupies residues 624–663 (QAKDGKGAKAPVPSLGGKAAAKGAKSAKGKAKETVPTDRP). Residues 639 to 649 (GGKAAAKGAKS) show a composition bias toward low complexity. Basic and acidic residues predominate over residues 653-663 (KAKETVPTDRP). The 36-residue stretch at 668-703 (AEEIEELTNRMRAAAADLQFEIAARLRDEVSEMKKE) folds into the UVR domain.

The protein belongs to the UvrB family. As to quaternary structure, forms a heterotetramer with UvrA during the search for lesions. Interacts with UvrC in an incision complex.

Its subcellular location is the cytoplasm. Functionally, the UvrABC repair system catalyzes the recognition and processing of DNA lesions. A damage recognition complex composed of 2 UvrA and 2 UvrB subunits scans DNA for abnormalities. Upon binding of the UvrA(2)B(2) complex to a putative damaged site, the DNA wraps around one UvrB monomer. DNA wrap is dependent on ATP binding by UvrB and probably causes local melting of the DNA helix, facilitating insertion of UvrB beta-hairpin between the DNA strands. Then UvrB probes one DNA strand for the presence of a lesion. If a lesion is found the UvrA subunits dissociate and the UvrB-DNA preincision complex is formed. This complex is subsequently bound by UvrC and the second UvrB is released. If no lesion is found, the DNA wraps around the other UvrB subunit that will check the other stand for damage. This Streptomyces avermitilis (strain ATCC 31267 / DSM 46492 / JCM 5070 / NBRC 14893 / NCIMB 12804 / NRRL 8165 / MA-4680) protein is UvrABC system protein B.